Here is a 145-residue protein sequence, read N- to C-terminus: Protein BUD31 homolog 3 (145 aa).

This sequence belongs to the BUD31 (G10) family.

Its subcellular location is the nucleus. This Oryza sativa subsp. japonica (Rice) protein is Protein BUD31 homolog 3.